We begin with the raw amino-acid sequence, 324 residues long: Galactosylgalactosylxylosylprotein 3-beta-glucuronosyltransferase 2 (324 aa).

The Cytoplasmic portion of the chain corresponds to 1–2 (MK). A helical; Signal-anchor for type II membrane protein transmembrane segment spans residues 3 to 23 (SALCNRFFILLPWILIVIIML). The Lumenal segment spans residues 24 to 324 (DVDPRRPAPQ…YHMDTVNIEV (301 aa)). Residues 34 to 78 (LTSRPYFSPHTVGCGGSRVPLRRSSPGRDAAEKRNESRPQLQPEP) form a disordered region. N-linked (GlcNAc...) asparagine glycosylation is present at Asn68. Asp188 lines the Mn(2+) pocket. Glu274 serves as the catalytic Proton acceptor. Asn293 carries an N-linked (GlcNAc...) asparagine glycan.

This sequence belongs to the glycosyltransferase 43 family. As to quaternary structure, homodimer. Mn(2+) serves as cofactor. Expressed in the cerebral cortex, cerebellum and whole brain.

It localises to the golgi apparatus membrane. It catalyses the reaction 3-O-(beta-D-galactosyl-(1-&gt;3)-beta-D-galactosyl-(1-&gt;4)-beta-D-xylosyl)-L-seryl-[protein] + UDP-alpha-D-glucuronate = 3-O-(beta-D-GlcA-(1-&gt;3)-beta-D-Gal-(1-&gt;3)-beta-D-Gal-(1-&gt;4)-beta-D-Xyl)-L-seryl-[protein] + UDP + H(+). It participates in protein modification; protein glycosylation. In terms of biological role, involved in the biosynthesis of L2/HNK-1 carbohydrate epitope on both glycolipids and glycoproteins. Substrates include asialo-orosomucoid (ASOR), paragloboside (lacto-N-neotetraosylceramide), Gal-beta-1,4-GlcNAc-beta-1,3-Gal-beta-1,4-Glc-pyridylamine and Gal-beta-1,3-GlcNAc-beta-1,3-Gal-beta-1,4-Glc-pyridylamine. This Rattus norvegicus (Rat) protein is Galactosylgalactosylxylosylprotein 3-beta-glucuronosyltransferase 2 (B3gat2).